The following is a 236-amino-acid chain: Ubiquitin carboxyl-terminal hydrolase YUH1 (236 aa).

The UCH catalytic domain maps to 7-233 (AVVPIESNPE…LNFAMLGLGP (227 aa)). The segment at 10 to 15 (PIESNP) is interaction with ubiquitin. The active-site Nucleophile is the Cys90. The interaction with ubiquitin stretch occupies residues 149-157 (FSTGQSEAP). The active-site Proton donor is the His166. An interaction with ubiquitin region spans residues 219–228 (NEEDVLNFAM).

Belongs to the peptidase C12 family.

The catalysed reaction is Thiol-dependent hydrolysis of ester, thioester, amide, peptide and isopeptide bonds formed by the C-terminal Gly of ubiquitin (a 76-residue protein attached to proteins as an intracellular targeting signal).. Deubiquitinating enzyme (DUB) that controls levels of cellular ubiquitin through processing of ubiquitin precursors and ubiquitinated proteins. Thiol protease that recognizes and hydrolyzes a peptide bond at the C-terminal glycine of either ubiquitin or RUB1. Preferentially cleaves ubiquitin from peptides and small adducts. This is Ubiquitin carboxyl-terminal hydrolase YUH1 (YUH1) from Saccharomyces cerevisiae (strain ATCC 204508 / S288c) (Baker's yeast).